The following is a 972-amino-acid chain: UPF0746 protein DDB_G0280785 (972 aa).

Positions 1-19 (MISNKRKEIENINRHHEKD) are enriched in basic and acidic residues. Residues 1-30 (MISNKRKEIENINRHHEKDNDDDDSDGIDN) are disordered. The SAP domain maps to 44–78 (SGSTNYRELQIIAKSLGLASNGKKQLVYNRIEGYF).

It belongs to the UPF0746 family.

This chain is UPF0746 protein DDB_G0280785, found in Dictyostelium discoideum (Social amoeba).